A 380-amino-acid chain; its full sequence is Carbamoyl phosphate synthase small chain (380 aa).

Residues 1-184 (MTTSTRGAHR…EAYVVPAIGE (184 aa)) form a CPSase region. L-glutamine is bound by residues S55, G236, and G238. A Glutamine amidotransferase type-1 domain is found at 188 to 380 (TVAAVDLGIK…FVNLMEGQRA (193 aa)). Residue C264 is the Nucleophile of the active site. Positions 265, 268, 306, 308, and 309 each coordinate L-glutamine. Residues H354 and E356 contribute to the active site.

The protein belongs to the CarA family. As to quaternary structure, composed of two chains; the small (or glutamine) chain promotes the hydrolysis of glutamine to ammonia, which is used by the large (or ammonia) chain to synthesize carbamoyl phosphate. Tetramer of heterodimers (alpha,beta)4.

The enzyme catalyses hydrogencarbonate + L-glutamine + 2 ATP + H2O = carbamoyl phosphate + L-glutamate + 2 ADP + phosphate + 2 H(+). It carries out the reaction L-glutamine + H2O = L-glutamate + NH4(+). It participates in amino-acid biosynthesis; L-arginine biosynthesis; carbamoyl phosphate from bicarbonate: step 1/1. It functions in the pathway pyrimidine metabolism; UMP biosynthesis via de novo pathway; (S)-dihydroorotate from bicarbonate: step 1/3. Small subunit of the glutamine-dependent carbamoyl phosphate synthetase (CPSase). CPSase catalyzes the formation of carbamoyl phosphate from the ammonia moiety of glutamine, carbonate, and phosphate donated by ATP, constituting the first step of 2 biosynthetic pathways, one leading to arginine and/or urea and the other to pyrimidine nucleotides. The small subunit (glutamine amidotransferase) binds and cleaves glutamine to supply the large subunit with the substrate ammonia. The chain is Carbamoyl phosphate synthase small chain from Streptomyces coelicolor (strain ATCC BAA-471 / A3(2) / M145).